A 495-amino-acid polypeptide reads, in one-letter code: REST corepressor 3 (495 aa).

The ELM2 domain maps to 1 to 83 (MRVGAEYQAR…KSLADLPNFT (83 aa)). K20 participates in a covalent cross-link: Glycyl lysine isopeptide (Lys-Gly) (interchain with G-Cter in SUMO2). Residues 84–135 (PFPDEWTVEDKVLFEQAFSFHGKSFHRIQQMLPDKTIASLVKYYYSWKKTRS) form the SANT 1 domain. Residues 147 to 219 (LANRHNQGDS…SQRSKCRPPK (73 aa)) are disordered. S156 and S171 each carry phosphoserine. Residues 162–184 (ETHPMDGNDSDYDPKKEAKKEGN) are compositionally biased toward basic and acidic residues. Residue K193 forms a Glycyl lysine isopeptide (Lys-Gly) (interchain with G-Cter in SUMO2) linkage. Residues 205–217 (QHRHHSQRSKCRP) show a composition bias toward basic residues. Positions 237–273 (AANTILRQLDMELISLKRQVQNAKQVNSALKQKMEGG) form a coiled coil. A Glycyl lysine isopeptide (Lys-Gly) (interchain with G-Cter in SUMO2) cross-link involves residue K285. In terms of domain architecture, SANT 2 spans 285–336 (KINARWTTEEQLLAVQGVRKYGKDFQAIADVIGNKTVGQVKNFFVNYRRRFN). Residues 346 to 495 (AEQGTQASNG…IQTDSQSSLH (150 aa)) are disordered. Polar residues predominate over residues 348-357 (QGTQASNGDA). T376 is modified (phosphothreonine). Over residues 393–405 (PSPPAPSSTPTPT) the composition is skewed to pro residues. Residues 419–428 (RPTLPAAPAL) are compositionally biased toward low complexity. Residues R445 and R457 each carry the asymmetric dimethylarginine modification. The span at 475–495 (VGGQQPPSLIGIQTDSQSSLH) shows a compositional bias: polar residues.

The protein belongs to the CoREST family.

The protein localises to the nucleus. Functionally, may act as a component of a corepressor complex that represses transcription. This Homo sapiens (Human) protein is REST corepressor 3 (RCOR3).